A 271-amino-acid chain; its full sequence is 4-hydroxy-tetrahydrodipicolinate reductase (271 aa).

Gly-8 to Met-13 contributes to the NAD(+) binding site. Arg-35 is a binding site for NADP(+). NAD(+) contacts are provided by residues Gly-100–Thr-102 and Ala-124–Met-127. The Proton donor/acceptor role is filled by His-157. His-158 is a binding site for (S)-2,3,4,5-tetrahydrodipicolinate. Lys-161 acts as the Proton donor in catalysis. Gly-167–Thr-168 contacts (S)-2,3,4,5-tetrahydrodipicolinate.

The protein belongs to the DapB family.

Its subcellular location is the cytoplasm. It catalyses the reaction (S)-2,3,4,5-tetrahydrodipicolinate + NAD(+) + H2O = (2S,4S)-4-hydroxy-2,3,4,5-tetrahydrodipicolinate + NADH + H(+). The catalysed reaction is (S)-2,3,4,5-tetrahydrodipicolinate + NADP(+) + H2O = (2S,4S)-4-hydroxy-2,3,4,5-tetrahydrodipicolinate + NADPH + H(+). It functions in the pathway amino-acid biosynthesis; L-lysine biosynthesis via DAP pathway; (S)-tetrahydrodipicolinate from L-aspartate: step 4/4. Its function is as follows. Catalyzes the conversion of 4-hydroxy-tetrahydrodipicolinate (HTPA) to tetrahydrodipicolinate. This Myxococcus xanthus (strain DK1622) protein is 4-hydroxy-tetrahydrodipicolinate reductase.